A 70-amino-acid chain; its full sequence is DNA gyrase inhibitor YacG (70 aa).

Residues Cys20, Cys23, Cys35, and Cys39 each coordinate Zn(2+).

It belongs to the DNA gyrase inhibitor YacG family. As to quaternary structure, interacts with GyrB. Requires Zn(2+) as cofactor.

In terms of biological role, inhibits all the catalytic activities of DNA gyrase by preventing its interaction with DNA. Acts by binding directly to the C-terminal domain of GyrB, which probably disrupts DNA binding by the gyrase. The polypeptide is DNA gyrase inhibitor YacG (Rhizobium etli (strain ATCC 51251 / DSM 11541 / JCM 21823 / NBRC 15573 / CFN 42)).